Here is a 156-residue protein sequence, read N- to C-terminus: Small ribosomal subunit protein uS7 (156 aa).

Belongs to the universal ribosomal protein uS7 family. Part of the 30S ribosomal subunit. Contacts proteins S9 and S11.

In terms of biological role, one of the primary rRNA binding proteins, it binds directly to 16S rRNA where it nucleates assembly of the head domain of the 30S subunit. Is located at the subunit interface close to the decoding center, probably blocks exit of the E-site tRNA. In Nocardioides sp. (strain ATCC BAA-499 / JS614), this protein is Small ribosomal subunit protein uS7.